Here is a 467-residue protein sequence, read N- to C-terminus: Fumarate hydratase class II (467 aa).

Substrate is bound by residues 98–100 (SGT), arginine 126, 129–132 (HPND), 139–141 (SSN), and threonine 187. Residue histidine 188 is the Proton donor/acceptor of the active site. Residue serine 318 is part of the active site. Substrate contacts are provided by residues serine 319 and 324 to 326 (KVN).

The protein belongs to the class-II fumarase/aspartase family. Fumarase subfamily. As to quaternary structure, homotetramer.

The protein localises to the cytoplasm. The enzyme catalyses (S)-malate = fumarate + H2O. The protein operates within carbohydrate metabolism; tricarboxylic acid cycle; (S)-malate from fumarate: step 1/1. Functionally, involved in the TCA cycle. Catalyzes the stereospecific interconversion of fumarate to L-malate. This chain is Fumarate hydratase class II, found in Salmonella typhi.